The primary structure comprises 337 residues: tRNA N6-adenosine threonylcarbamoyltransferase (337 aa).

Residues H111 and H115 each coordinate Fe cation. Substrate-binding positions include 134-138 (LVSGG), D167, G180, and N272. D300 provides a ligand contact to Fe cation.

Belongs to the KAE1 / TsaD family. It depends on Fe(2+) as a cofactor.

It localises to the cytoplasm. The enzyme catalyses L-threonylcarbamoyladenylate + adenosine(37) in tRNA = N(6)-L-threonylcarbamoyladenosine(37) in tRNA + AMP + H(+). Its function is as follows. Required for the formation of a threonylcarbamoyl group on adenosine at position 37 (t(6)A37) in tRNAs that read codons beginning with adenine. Is involved in the transfer of the threonylcarbamoyl moiety of threonylcarbamoyl-AMP (TC-AMP) to the N6 group of A37, together with TsaE and TsaB. TsaD likely plays a direct catalytic role in this reaction. The protein is tRNA N6-adenosine threonylcarbamoyltransferase of Salmonella arizonae (strain ATCC BAA-731 / CDC346-86 / RSK2980).